Here is a 134-residue protein sequence, read N- to C-terminus: Prefoldin subunit 4 (134 aa).

Residue Ala-2 is modified to N-acetylalanine. Ser-125 is subject to Phosphoserine.

The protein belongs to the prefoldin subunit beta family. As to quaternary structure, heterohexamer of two PFD-alpha type and four PFD-beta type subunits. Interacts with URI1; the interaction is phosphorylation-dependent and occurs in a growth-dependent manner.

It localises to the nucleus. The protein resides in the cytoplasm. The protein localises to the mitochondrion. In terms of biological role, binds specifically to cytosolic chaperonin (c-CPN) and transfers target proteins to it. Binds to nascent polypeptide chain and promotes folding in an environment in which there are many competing pathways for nonnative proteins. This Homo sapiens (Human) protein is Prefoldin subunit 4 (PFDN4).